Here is a 207-residue protein sequence, read N- to C-terminus: Protein GrpE (207 aa).

The protein belongs to the GrpE family. In terms of assembly, homodimer.

The protein localises to the cytoplasm. Functionally, participates actively in the response to hyperosmotic and heat shock by preventing the aggregation of stress-denatured proteins, in association with DnaK and GrpE. It is the nucleotide exchange factor for DnaK and may function as a thermosensor. Unfolded proteins bind initially to DnaJ; upon interaction with the DnaJ-bound protein, DnaK hydrolyzes its bound ATP, resulting in the formation of a stable complex. GrpE releases ADP from DnaK; ATP binding to DnaK triggers the release of the substrate protein, thus completing the reaction cycle. Several rounds of ATP-dependent interactions between DnaJ, DnaK and GrpE are required for fully efficient folding. The sequence is that of Protein GrpE from Pelodictyon phaeoclathratiforme (strain DSM 5477 / BU-1).